The chain runs to 127 residues: Fluoride-specific ion channel FluC (127 aa).

4 helical membrane passes run 7–27 (VYVALGGALGAVSRYLIVAWV), 38–58 (GTLAVNLLGSFLLGTAFVYVV), 70–90 (LIMVGFLGALTTFSTFSLEAW), and 102–122 (LAYILMSVILCLFAVSAGIAL). The Na(+) site is built by glycine 77 and threonine 80.

It belongs to the fluoride channel Fluc/FEX (TC 1.A.43) family.

It localises to the cell inner membrane. It carries out the reaction fluoride(in) = fluoride(out). Its activity is regulated as follows. Na(+) is not transported, but it plays an essential structural role and its presence is essential for fluoride channel function. Fluoride-specific ion channel. Important for reducing fluoride concentration in the cell, thus reducing its toxicity. This Hahella chejuensis (strain KCTC 2396) protein is Fluoride-specific ion channel FluC.